Reading from the N-terminus, the 98-residue chain is MSRVCELTGKAVLTGNNVSHANNKTKRRFLPNLCQVTLISDALNQRYRLRVSAAALRSVEHRGGLDAFLIKASENELSMRARLLRRQIVKKTAEAAAA.

It belongs to the bacterial ribosomal protein bL28 family.

This is Large ribosomal subunit protein bL28 from Rhizobium etli (strain ATCC 51251 / DSM 11541 / JCM 21823 / NBRC 15573 / CFN 42).